The following is a 452-amino-acid chain: Isocitrate dehydrogenase [NADP], mitochondrial (452 aa).

A mitochondrion-targeting transit peptide spans 1 to 39 (MAGYLRVVRSLCRASGSRPAWAPAALTAPTSQEQPRRHY). An N6-acetyllysine mark is found at Lys-45, Lys-48, Lys-67, and Lys-69. Lys-80 and Lys-106 each carry N6-acetyllysine; alternate. Residues Lys-80 and Lys-106 each carry the N6-succinyllysine; alternate modification. Residues 115–117 (TIT) and Arg-122 contribute to the NADP(+) site. Residue Thr-117 participates in D-threo-isocitrate binding. Residues 134-140 (SPNGTIR) and Arg-149 each bind D-threo-isocitrate. Lys-155 is modified (N6-acetyllysine). Residue Lys-166 is modified to N6-acetyllysine; alternate. N6-succinyllysine; alternate is present on Lys-166. A D-threo-isocitrate-binding site is contributed by Arg-172. N6-acetyllysine; alternate is present on residues Lys-180 and Lys-193. Lys-180 and Lys-193 each carry N6-succinyllysine; alternate. Lys-199 carries the post-translational modification N6-acetyllysine. Residue Lys-256 is modified to N6-acetyllysine; alternate. Lys-256 is subject to N6-succinyllysine; alternate. An N6-acetyllysine mark is found at Lys-263, Lys-272, Lys-275, and Lys-280. Position 282 is an N6-acetyllysine; alternate (Lys-282). Lys-282 carries the post-translational modification N6-succinyllysine; alternate. Residue Asp-291 coordinates Mn(2+). Residue Lys-299 coordinates NADP(+). Asp-314 is a binding site for Mn(2+). NADP(+) is bound by residues 349–354 (GTVTRH) and Asn-367. Lys-384 bears the N6-acetyllysine; alternate mark. Lys-384 carries the N6-succinyllysine; alternate modification. Lys-400, Lys-413, and Lys-442 each carry N6-acetyllysine.

Belongs to the isocitrate and isopropylmalate dehydrogenases family. As to quaternary structure, homodimer. Mg(2+) is required as a cofactor. It depends on Mn(2+) as a cofactor. In terms of processing, acetylation at Lys-413 dramatically reduces catalytic activity. Deacetylated by SIRT3.

The protein localises to the mitochondrion. The enzyme catalyses D-threo-isocitrate + NADP(+) = 2-oxoglutarate + CO2 + NADPH. Its function is as follows. Plays a role in intermediary metabolism and energy production. It may tightly associate or interact with the pyruvate dehydrogenase complex. This Homo sapiens (Human) protein is Isocitrate dehydrogenase [NADP], mitochondrial (IDH2).